An 834-amino-acid chain; its full sequence is Translation factor GUF1 homolog, mitochondrial (834 aa).

The N-terminal 66 residues, 1-66, are a transit peptide targeting the mitochondrion; it reads MKLCGVRSSG…RPLLAEPRRY (66 aa). In terms of domain architecture, tr-type G spans 129-314; the sequence is ACIRNVSVVA…HIIDKVPPPC (186 aa). GTP-binding positions include 138-145, 205-209, and 259-262; these read AHVDHGKT, DTPGH, and TKMD. Disordered regions lie at residues 363-385 and 476-507; these read GAAS…ASGG and TGSP…SSSV. Positions 488–507 are enriched in low complexity; sequence ATAAETASSDDASGSGSSSV.

This sequence belongs to the TRAFAC class translation factor GTPase superfamily. Classic translation factor GTPase family. LepA subfamily.

The protein localises to the mitochondrion inner membrane. It catalyses the reaction GTP + H2O = GDP + phosphate + H(+). In terms of biological role, promotes mitochondrial protein synthesis. May act as a fidelity factor of the translation reaction, by catalyzing a one-codon backward translocation of tRNAs on improperly translocated ribosomes. Binds to mitochondrial ribosomes in a GTP-dependent manner. This is Translation factor GUF1 homolog, mitochondrial from Leishmania infantum.